The chain runs to 290 residues: Small ribosomal subunit protein bS6 (290 aa).

A disordered region spans residues 208-233; the sequence is VEEAKTTAKKPAAPKMSAAERAKVDG.

Belongs to the bacterial ribosomal protein bS6 family.

Its function is as follows. Binds together with bS18 to 16S ribosomal RNA. This chain is Small ribosomal subunit protein bS6, found in Mesoplasma florum (strain ATCC 33453 / NBRC 100688 / NCTC 11704 / L1) (Acholeplasma florum).